Reading from the N-terminus, the 253-residue chain is Ditrans,polycis-undecaprenyl-diphosphate synthase ((2E,6E)-farnesyl-diphosphate specific) (253 aa).

The active site involves Asp-26. Residue Asp-26 participates in Mg(2+) binding. Substrate is bound by residues 27–30 (GNGR), Trp-31, Arg-39, His-43, and 71–73 (SSE). Catalysis depends on Asn-74, which acts as the Proton acceptor. Substrate-binding residues include Trp-75, Arg-77, and Arg-194. His-199 provides a ligand contact to Mg(2+). 200 to 202 (RIS) provides a ligand contact to substrate. Residue Glu-213 coordinates Mg(2+).

Belongs to the UPP synthase family. In terms of assembly, homodimer. The cofactor is Mg(2+).

It catalyses the reaction 8 isopentenyl diphosphate + (2E,6E)-farnesyl diphosphate = di-trans,octa-cis-undecaprenyl diphosphate + 8 diphosphate. Its function is as follows. Catalyzes the sequential condensation of isopentenyl diphosphate (IPP) with (2E,6E)-farnesyl diphosphate (E,E-FPP) to yield (2Z,6Z,10Z,14Z,18Z,22Z,26Z,30Z,34E,38E)-undecaprenyl diphosphate (di-trans,octa-cis-UPP). UPP is the precursor of glycosyl carrier lipid in the biosynthesis of bacterial cell wall polysaccharide components such as peptidoglycan and lipopolysaccharide. This chain is Ditrans,polycis-undecaprenyl-diphosphate synthase ((2E,6E)-farnesyl-diphosphate specific), found in Shigella flexneri.